A 94-amino-acid polypeptide reads, in one-letter code: Co-chaperonin GroES (94 aa).

It belongs to the GroES chaperonin family. Heptamer of 7 subunits arranged in a ring. Interacts with the chaperonin GroEL.

The protein localises to the cytoplasm. Together with the chaperonin GroEL, plays an essential role in assisting protein folding. The GroEL-GroES system forms a nano-cage that allows encapsulation of the non-native substrate proteins and provides a physical environment optimized to promote and accelerate protein folding. GroES binds to the apical surface of the GroEL ring, thereby capping the opening of the GroEL channel. The sequence is that of Co-chaperonin GroES from Clostridium botulinum.